Consider the following 232-residue polypeptide: Thiamine import ATP-binding protein ThiQ (232 aa).

One can recognise an ABC transporter domain in the interval 2–230 (LKLTDITWLY…KASASAILGI (229 aa)). Residue 32–39 (GPSGAGKS) coordinates ATP.

This sequence belongs to the ABC transporter superfamily. Thiamine importer (TC 3.A.1.19.1) family. In terms of assembly, the complex is composed of two ATP-binding proteins (ThiQ), two transmembrane proteins (ThiP) and a solute-binding protein (ThiB).

It localises to the cell inner membrane. It catalyses the reaction thiamine(out) + ATP + H2O = thiamine(in) + ADP + phosphate + H(+). In terms of biological role, part of the ABC transporter complex ThiBPQ involved in thiamine import. Responsible for energy coupling to the transport system. In Shigella boydii serotype 4 (strain Sb227), this protein is Thiamine import ATP-binding protein ThiQ.